Here is a 207-residue protein sequence, read N- to C-terminus: Adenine phosphoribosyltransferase (207 aa).

A disordered region spans residues 1–33 (MRPAKPPQSKERKRSKSLTSADHDNSPQRAETA).

Belongs to the purine/pyrimidine phosphoribosyltransferase family. In terms of assembly, homodimer.

The protein resides in the cytoplasm. The catalysed reaction is AMP + diphosphate = 5-phospho-alpha-D-ribose 1-diphosphate + adenine. It participates in purine metabolism; AMP biosynthesis via salvage pathway; AMP from adenine: step 1/1. In terms of biological role, catalyzes a salvage reaction resulting in the formation of AMP, that is energically less costly than de novo synthesis. The polypeptide is Adenine phosphoribosyltransferase (Corynebacterium jeikeium (strain K411)).